The chain runs to 102 residues: Small ribosomal subunit protein uS10 (102 aa).

This sequence belongs to the universal ribosomal protein uS10 family. In terms of assembly, part of the 30S ribosomal subunit.

In terms of biological role, involved in the binding of tRNA to the ribosomes. The polypeptide is Small ribosomal subunit protein uS10 (Bacillus anthracis (strain A0248)).